We begin with the raw amino-acid sequence, 410 residues long: WD repeat and FYVE domain-containing protein 1 (410 aa).

WD repeat units lie at residues 22 to 61 (GHQD…QYWP), 66 to 105 (TMAS…NKMN), 112 to 150 (AHQN…NMLG), 153 to 192 (FFSS…CSVI), 197 to 236 (GHEG…GRTL), and 240 to 279 (GHHD…EEAP). The segment at 281-352 (WLESDSCQKC…VCDSCYDSIK (72 aa)) adopts an FYVE-type zinc-finger fold. Cysteine 287, cysteine 290, cysteine 314, cysteine 317, cysteine 322, cysteine 325, cysteine 344, and cysteine 347 together coordinate Zn(2+). One copy of the WD 7 repeat lies at 364-403 (EGKHNISHMSMDIARGLMVTCGTDRVVKIWDMTPVVGCSL). Position 408 is a phosphoserine (serine 408).

Binds PtdIns3P in vitro with high specificity over other phosphoinositides. Interacts (via WD repeat 2) with tyrosine-phosphorylated TLR3 (via TIR domain) in response to poly(I:C). Interacts with TLR4 in response to LPS. Interacts with TICAM1 in response to poly(I:C).

It is found in the early endosome. In terms of biological role, positively regulates TLR3- and TLR4-mediated signaling pathways by bridging the interaction between TLR3 or TLR4 and TICAM1. Promotes TLR3/4 ligand-induced activation of transcription factors IRF3 and NF-kappa-B, as well as the production of IFN-beta and inflammatory cytokines. This is WD repeat and FYVE domain-containing protein 1 (Wdfy1) from Mus musculus (Mouse).